A 162-amino-acid polypeptide reads, in one-letter code: ATP-dependent Clp protease adapter protein CLPS1, chloroplastic (162 aa).

The transit peptide at Met-1–Trp-58 directs the protein to the chloroplast.

It belongs to the ClpS family.

It localises to the plastid. It is found in the chloroplast stroma. In terms of biological role, small adapter protein that modulate the activity of plastid Clp protease system (CLPC). Probably involved in substrate selection for plastid CLPC. The sequence is that of ATP-dependent Clp protease adapter protein CLPS1, chloroplastic from Chlamydomonas reinhardtii (Chlamydomonas smithii).